The primary structure comprises 384 residues: Putative spore germination protein YfkR (384 aa).

The N-terminal stretch at 1-20 is a signal peptide; sequence MKKTIYKCVLPLLICILLTG. Residue cysteine 21 is the site of N-palmitoyl cysteine attachment. Cysteine 21 carries S-diacylglycerol cysteine lipidation.

The protein belongs to the GerABKC lipoprotein family.

The protein localises to the cell membrane. Its function is as follows. May be involved in spore germination. In Bacillus subtilis (strain 168), this protein is Putative spore germination protein YfkR (yfkR).